The chain runs to 142 residues: Large ribosomal subunit protein uL13 (142 aa).

Belongs to the universal ribosomal protein uL13 family. As to quaternary structure, part of the 50S ribosomal subunit.

In terms of biological role, this protein is one of the early assembly proteins of the 50S ribosomal subunit, although it is not seen to bind rRNA by itself. It is important during the early stages of 50S assembly. The polypeptide is Large ribosomal subunit protein uL13 (Aromatoleum aromaticum (strain DSM 19018 / LMG 30748 / EbN1) (Azoarcus sp. (strain EbN1))).